A 242-amino-acid polypeptide reads, in one-letter code: Phosducin-like protein 2 (242 aa).

The region spanning 34-201 (VLRLQKEAMV…LEWKLAEVGA (168 aa)) is the Phosducin domain. Residues 89–242 (FGELREISGN…SSNSDSEDTK (154 aa)) are thioredoxin fold.

Belongs to the phosducin family. In terms of assembly, interacts with the CCT chaperonin complex and actin.

Its subcellular location is the endoplasmic reticulum. Functionally, essential for male fertility, spermiogenesis and acrosome formation. This Bos taurus (Bovine) protein is Phosducin-like protein 2 (PDCL2).